The sequence spans 851 residues: ATP-dependent DNA helicase DDX31 (851 aa).

A disordered region spans residues 1–196 (MAPDLASQRH…STSDRNQEER (196 aa)). The Q motif motif lies at 230–259 (AAFHELGLHPHLISTINTVLKMSSMTSVQK). Residues 262-443 (IPVLLEGRDA…DISLHDPVSI (182 aa)) enclose the Helicase ATP-binding domain. 275–282 (SQTGSGKT) lines the ATP pocket. A DEAD box motif is present at residues 388-391 (DEAD). The 180-residue stretch at 480 to 659 (SLKQHVTVVP…VSEIKMEDIL (180 aa)) folds into the Helicase C-terminal domain. Disordered regions lie at residues 762 to 784 (KKRKAHVKRPDLHKKTQSKHSLA) and 804 to 851 (KQNA…SQKV). R828 is subject to Omega-N-methylarginine. The span at 841 to 851 (VQRDSKTSQKV) shows a compositional bias: basic and acidic residues.

It belongs to the DEAD box helicase family. DDX31/DBP7 subfamily. In terms of assembly, interacts with NPM1; this interaction prevents interaction between NPM1 and HDM2. In terms of tissue distribution, weakly or undetectably expressed in normal organs. Up-regulated in renal cell carcinoma.

It is found in the nucleus. It localises to the nucleolus. The catalysed reaction is ATP + H2O = ADP + phosphate + H(+). May have DNA helicase activity and RNA helicase activity. Probably have ssDNA and RNA dependent ATPase activity. Plays a role in ribosome biogenesis and TP53/p53 regulation through its interaction with NPM1. This is ATP-dependent DNA helicase DDX31 from Homo sapiens (Human).